Reading from the N-terminus, the 994-residue chain is Phosphoenolpyruvate carboxylase (994 aa).

Residues 1–66 (MKSSGSARAT…QGRTREDKDR (66 aa)) form a disordered region. 2 stretches are compositionally biased toward low complexity: residues 14-25 (AVSSSSAPAHAE) and 41-54 (AAAR…AASA). Residues histidine 204 and lysine 646 contribute to the active site.

This sequence belongs to the PEPCase type 1 family. Requires Mg(2+) as cofactor.

It catalyses the reaction oxaloacetate + phosphate = phosphoenolpyruvate + hydrogencarbonate. In terms of biological role, forms oxaloacetate, a four-carbon dicarboxylic acid source for the tricarboxylic acid cycle. This is Phosphoenolpyruvate carboxylase from Burkholderia pseudomallei (strain 668).